The chain runs to 326 residues: Transposase for insertion sequence element IS4351 (326 aa).

The Integrase catalytic domain occupies 156 to 317 (IDERPEIVEL…TPNEKFKQII (162 aa)).

Belongs to the transposase IS30 family.

Required for the transposition of the insertion element. This Bacteroides fragilis protein is Transposase for insertion sequence element IS4351.